We begin with the raw amino-acid sequence, 295 residues long: Hepatic leukemia factor (295 aa).

Residues 34–52 (LHPEDAFSKDRDKGKKLDD) show a composition bias toward basic and acidic residues. Disordered stretches follow at residues 34–69 (LHPE…GPTL) and 93–160 (SENG…NRNT). Residues 225–288 (DDKYWARRRK…GKCKNILAKY (64 aa)) enclose the bZIP domain. Positions 227-247 (KYWARRRKNNMAAKRSRDARR) are basic motif. The tract at residues 248-255 (LKENQIAI) is leucine-zipper.

This sequence belongs to the bZIP family. PAR subfamily. Binds DNA specifically as homodimer or heterodimer with other PAR factors. In terms of tissue distribution, isoform HLF43 is abundant in brain, liver and kidney. Isoform HLF36 is expressed only in the liver. Both isoforms accumulate in the liver with different circadian amplitudes. Isoform HLF36 reaches peak expression levels between 8 and 12 p.m. Isoform HLF43 displays a more pronounced fluctuation through the day.

The protein localises to the nucleus. The protein is Hepatic leukemia factor (Hlf) of Rattus norvegicus (Rat).